The following is a 490-amino-acid chain: MTDLTDLTLAAALDGLKSKQFSSAEITGAFLQAMEKSRVLNAYVVETPEKAMEMARASDARIAKGEGGRLEGAPLGIKDLYCTKGVRTTACSNILGEFTPTYESTVTQNLWDEGAVMLGKLNMDEFAMGSSNETSRFGPPINPWRRKGDNAGLTPGGSSGGSAAAVSGNLCLAATASDTGGSIRQPASFTGTVGIKPTYGRASRYGMVAFASSLDQAGPIAKTVEDSALLLEIMCSHDPKDSTSLKVETPDWRSDVRKGVKGMKIGIPKEYRIEGLSEEIEALWQQGIAWLKAAGAEIVEISLPHTKYALPAYYIVAPAEASSNLARYDGMRYGARVEGNNLTQTYEASRASGFGKEVQRRLMIGTYVLSSGYYDAYYLRAQKVRAKIFQDFVGAFEQCDAILTPACPSTAFAFGEKSGDPLEMYLMDVFTVTANLAGLPGISVPAGLSASGLPLGLQVIGKALDESACFRVGGVLEDAASFVAKPDRWW.

Catalysis depends on charge relay system residues lysine 78 and serine 158. Residues 131–159 (SNETSRFGPPINPWRRKGDNAGLTPGGSS) form a disordered region. The Acyl-ester intermediate role is filled by serine 182.

Belongs to the amidase family. GatA subfamily. Heterotrimer of A, B and C subunits.

The enzyme catalyses L-glutamyl-tRNA(Gln) + L-glutamine + ATP + H2O = L-glutaminyl-tRNA(Gln) + L-glutamate + ADP + phosphate + H(+). Its function is as follows. Allows the formation of correctly charged Gln-tRNA(Gln) through the transamidation of misacylated Glu-tRNA(Gln) in organisms which lack glutaminyl-tRNA synthetase. The reaction takes place in the presence of glutamine and ATP through an activated gamma-phospho-Glu-tRNA(Gln). The polypeptide is Glutamyl-tRNA(Gln) amidotransferase subunit A (Hyphomonas neptunium (strain ATCC 15444)).